We begin with the raw amino-acid sequence, 241 residues long: Large ribosomal subunit protein uL1 (241 aa).

Belongs to the universal ribosomal protein uL1 family. As to quaternary structure, part of the 50S ribosomal subunit.

In terms of biological role, binds directly to 23S rRNA. The L1 stalk is quite mobile in the ribosome, and is involved in E site tRNA release. Its function is as follows. Protein L1 is also a translational repressor protein, it controls the translation of the L11 operon by binding to its mRNA. In Streptomyces coelicolor (strain ATCC BAA-471 / A3(2) / M145), this protein is Large ribosomal subunit protein uL1.